The sequence spans 307 residues: ATP synthase gamma chain (307 aa).

Belongs to the ATPase gamma chain family. In terms of assembly, F-type ATPases have 2 components, CF(1) - the catalytic core - and CF(0) - the membrane proton channel. CF(1) has five subunits: alpha(3), beta(3), gamma(1), delta(1), epsilon(1). CF(0) has three main subunits: a, b and c.

The protein resides in the cell membrane. In terms of biological role, produces ATP from ADP in the presence of a proton gradient across the membrane. The gamma chain is believed to be important in regulating ATPase activity and the flow of protons through the CF(0) complex. The sequence is that of ATP synthase gamma chain from Mycolicibacterium smegmatis (strain ATCC 700084 / mc(2)155) (Mycobacterium smegmatis).